The following is a 792-amino-acid chain: Oxidoreductase cns1 (792 aa).

Interacts with cns2.

The protein localises to the lipid droplet. The protein operates within secondary metabolite biosynthesis. Its function is as follows. Oxidoreductase; part of the gene cluster that mediates the biosynthesis of cordycepin (COR) and pentostatin (PTN), two adenosine analogs with related bioactivity profiles as both mimic adenosine and can inhibit some of the processes that are adenosine dependent. Within the pathway, cns1 catalyzes the last step by converting the cns2 product 2'-carbonyl-3'-deoxyadenosine (2'-C-3'-dA) into cordycepin (3'-deoxyadenosine). The first step of cordycepin biosynthesis involves hydroxyl phosphorylation of the 3'-OH position on adenosine to produce adenosine-3'-monophosphate (3'-AMP), catalyzed by kinase activity of cns3. Next, 3'-AMP is dephosphorylated to 2'-carbonyl-3'-deoxyadenosine by cns2, which is finally converted to cordycepin by the oxidoreductase cns1. Pentostatin production is mediated by the ATP phosphoribosyltransferase activity of cns3 on adenosine to inhibit the activity of adenosine deaminase (ADA) to prevent COR deamination to 3'-deoxyinosine (3'-dI). The chain is Oxidoreductase cns1 from Cordyceps militaris (strain CM01) (Caterpillar fungus).